A 658-amino-acid polypeptide reads, in one-letter code: Translation factor GUF1, mitochondrial (658 aa).

The 187-residue stretch at 45–231 (ENYRNFSIVA…AVIDRIPPPT (187 aa)) folds into the tr-type G domain. Residues 54–61 (AHIDHGKS), 123–127 (DTPGH), and 177–180 (NKID) each bind GTP.

This sequence belongs to the TRAFAC class translation factor GTPase superfamily. Classic translation factor GTPase family. LepA subfamily.

Its subcellular location is the mitochondrion inner membrane. It catalyses the reaction GTP + H2O = GDP + phosphate + H(+). In terms of biological role, promotes mitochondrial protein synthesis. May act as a fidelity factor of the translation reaction, by catalyzing a one-codon backward translocation of tRNAs on improperly translocated ribosomes. Binds to mitochondrial ribosomes in a GTP-dependent manner. This chain is Translation factor GUF1, mitochondrial, found in Vanderwaltozyma polyspora (strain ATCC 22028 / DSM 70294 / BCRC 21397 / CBS 2163 / NBRC 10782 / NRRL Y-8283 / UCD 57-17) (Kluyveromyces polysporus).